Reading from the N-terminus, the 1209-residue chain is MGTELMRICVKEDSDDLPSVPPGFESYATFTLKRVVPATTSDKAKTPAIESVSATEQAKMEVESDEAKAARALRRRPWINHSGCDDDGDCAANNDNAASQNPDQNCDVKPALPKGVVRGCEECKDCQKVTARWHPDEARRPDLEDAPVFYPSEEEFEDTLNYIAKIRPEAEKYGICRIVPPPSWKPPCPLKEKQVWEGSKFTTRVQRVDKLQNRSSMKKISKLPNQMRKKKRKCMKMGMDSVTNGMGDPCSASTGMNELETFGFEPGPGFTLKDFQKYADEFKAQYFKKSETSTDDKCKVDNSIDCWEPALEDVEGEYWRIVDKATEEIEVLYGADLETGVFGSGFPKISSSHNASSSEDKYAKSGWNLNNFPRLPGSLLKYEGSDISGVLVPWLYIGMCFSSFCWHVEDHHLYSLNYMHWGAPKLWYGVGGKDAVKLEEAMRKHLPDLFEEQPDLLHKLVTQLSPSKLKTAGVPVHRCVQHAGEFVLTFPRAYHAGFNSGFNCAEAVNVAPVDWLPHGQIAIELYCQQGRKTSISHDKLLLGAAREVVKADWELNLLRKNTVDNLRWKAFSAKDGILAKTLKARIDMERTRREFLCNSSLALKMHSNFDATNERECCICFFDLHLSAAGCRCSPEKYSCLTHVKELCSCPWVTKYFLFRYDIDELNVLVEAVEGKLSSVYRWARQDLGLALSTDVSGSKMEIDEEGKVHKDPTPQTTALSGKDLQLKVTSKEVSKELEKTSKLSHVNLLLKEKEEQITSSHCMKPVKEETVCDSSDPNVSACQPSEGGIICMTAVKSASGKKNSQSLPNDVILLSDDEYDIPRKRGSVRRDAISSGKKLEIRERPTHVLALEASAKIAAPICQREGDSLRDTRNTISLPTNDQKTMRRDVPSSTSHAEVNAEATGLTQDICNRMATNSHGGGKPTSCKSKNSGGLAIVDVVDGTRSSSGTPSCSQNNSPDRFIRQKGPRIAKVVRRINCNVEPLSYGCVLSGKSWCSRRAIFPKGFRSRVKYINILDPTNMCFYISEILDAGRNSPLFMVYLESNPSEVFVHMSPTRCWEMVRERVNQEITKQHKAGKSDLPPLQPSGSPDGFEMFGYSSPAIVQAIEALDVNRVCTDYWDSRPYSRPQVQFPANPLLREANTSGRSNVGNLQLNPGHHISPTGINSILKVLFKKASMEELSSLQEVLSETNSDMVTELVKEEIQNRR.

A JmjN domain is found at 146 to 187; sequence APVFYPSEEEFEDTLNYIAKIRPEAEKYGICRIVPPPSWKPP. The Nuclear localization signal motif lies at 217 to 224; that stretch reads MKKISKLP. Positions 361–527 constitute a JmjC domain; it reads KYAKSGWNLN…HGQIAIELYC (167 aa). His407, Glu409, and His495 together coordinate Fe cation. Cys617, Cys620, Cys631, Cys633, Cys640, His643, Cys648, and Cys650 together coordinate Zn(2+). A C5HC2 zinc finger spans residues 617–667; the sequence is CCICFFDLHLSAAGCRCSPEKYSCLTHVKELCSCPWVTKYFLFRYDIDELN. The segment at 872-900 is disordered; that stretch reads DTRNTISLPTNDQKTMRRDVPSSTSHAEV. The span at 875–884 shows a compositional bias: polar residues; the sequence is NTISLPTNDQ. One can recognise an FYR N-terminal domain in the interval 974 to 1032; sequence VVRRINCNVEPLSYGCVLSGKSWCSRRAIFPKGFRSRVKYINILDPTNMCFYISEILDA. The region spanning 1034–1124 is the FYR C-terminal domain; sequence RNSPLFMVYL…RVCTDYWDSR (91 aa).

The protein belongs to the JARID1 histone demethylase family. Interacts with MMD1 in the nucleus of male meiocytes, especially on pachytene chromosomes. Fe(2+) serves as cofactor. As to expression, confined to inflorescences.

It is found in the nucleus. The catalysed reaction is N(6),N(6),N(6)-trimethyl-L-lysyl(4)-[histone H3] + 2-oxoglutarate + O2 = N(6),N(6)-dimethyl-L-lysyl(4)-[histone H3] + formaldehyde + succinate + CO2. It catalyses the reaction N(6),N(6)-dimethyl-L-lysyl(4)-[histone H3] + 2-oxoglutarate + O2 = N(6)-methyl-L-lysyl(4)-[histone H3] + formaldehyde + succinate + CO2. The enzyme catalyses N(6)-methyl-L-lysyl(4)-[histone H3] + 2-oxoglutarate + O2 = L-lysyl(4)-[histone H3] + formaldehyde + succinate + CO2. Its function is as follows. Functions as a histone H3 'Lys-4' (H3K4me) demethylase involved in the negative regulation of gene expression. Active on H3K4me1, H3K4me2 and H3K4me3. Not active on mono-, di- and trimethylated H3K9, H3K27 and H3K36 in somatic cells. However, also active on H3K9 when in complex with MMD1, a meiocyte-specific histone reader. Together with MMD1, promotes gene expression in male meiocytes in an H3K9me3-dependent manner, and contributes to meiotic chromosome condensation by triggering some condensin promoters (e.g. CAP-D3 and CAP-H). Together with JMJ14 and JMJ17, required for plant growth and development. Represses leaf senescence in an age-dependent manner by demethylating H3K4me3 activating histone marks at senescence-associated genes (SAGs) loci, including WRKY53 and SAG201, thus preventing their premature expression. This is Putative lysine-specific demethylase JMJ16 from Arabidopsis thaliana (Mouse-ear cress).